A 232-amino-acid chain; its full sequence is MSNNPRSIIAIVPAAGIGSRMGADKPKQYLMLGQQSILGHTLDTLLAHPDIEQVIVALHPQDNYFNQLPQSQHPKLTQVVGGGERADSVLAALDYAHNYNPGAWALVHDAARPCVTHQDITQLIKSVAIHPQGAILAAPVCDTMKRSDASGLIVHTVDRSLLWHALTPQFFPVSILRTHLSAALAAQVPITDEASAMEWAGVMPGLVNGRMDNIKVTHPDDLQLAALFMSQQ.

The protein belongs to the IspD/TarI cytidylyltransferase family. IspD subfamily.

It carries out the reaction 2-C-methyl-D-erythritol 4-phosphate + CTP + H(+) = 4-CDP-2-C-methyl-D-erythritol + diphosphate. It participates in isoprenoid biosynthesis; isopentenyl diphosphate biosynthesis via DXP pathway; isopentenyl diphosphate from 1-deoxy-D-xylulose 5-phosphate: step 2/6. Its function is as follows. Catalyzes the formation of 4-diphosphocytidyl-2-C-methyl-D-erythritol from CTP and 2-C-methyl-D-erythritol 4-phosphate (MEP). This Shewanella frigidimarina (strain NCIMB 400) protein is 2-C-methyl-D-erythritol 4-phosphate cytidylyltransferase.